We begin with the raw amino-acid sequence, 495 residues long: GTPase Der (495 aa).

2 EngA-type G domains span residues 3 to 166 and 208 to 381; these read PVVA…VQDE and IKLA…SCAT. GTP is bound by residues 9–16, 56–60, 118–121, 214–221, 261–265, and 326–329; these read GRPNVGKS, DTGGI, NKTD, DTAGV, and NKWD. The region spanning 382–466 is the KH-like domain; that stretch reads RRVSTAMLTR…PIRIQFKEGE (85 aa).

This sequence belongs to the TRAFAC class TrmE-Era-EngA-EngB-Septin-like GTPase superfamily. EngA (Der) GTPase family. Associates with the 50S ribosomal subunit.

Functionally, GTPase that plays an essential role in the late steps of ribosome biogenesis. The sequence is that of GTPase Der from Pectobacterium atrosepticum (strain SCRI 1043 / ATCC BAA-672) (Erwinia carotovora subsp. atroseptica).